The sequence spans 43 residues: Delta-actitoxin-Bca1a (43 aa).

Cystine bridges form between cysteine 1-cysteine 41, cysteine 3-cysteine 31, and cysteine 24-cysteine 42.

It is found in the secreted. The protein localises to the nematocyst. Binds specifically to voltage-gated sodium channels (Nav), thereby delaying their inactivation during signal transduction. Thus it strongly stimulates mammalian cardiac muscle contraction. In Bunodosoma capense (Knobbly sea anemone), this protein is Delta-actitoxin-Bca1a.